We begin with the raw amino-acid sequence, 92 residues long: Small ribosomal subunit protein uS19 (92 aa).

It belongs to the universal ribosomal protein uS19 family.

Functionally, protein S19 forms a complex with S13 that binds strongly to the 16S ribosomal RNA. The chain is Small ribosomal subunit protein uS19 from Staphylococcus aureus (strain Mu3 / ATCC 700698).